A 383-amino-acid chain; its full sequence is Galactokinase (383 aa).

Substrate is bound at residue E34–D37. An ATP-binding site is contributed by G124–S130. Residues S130 and E162 each coordinate Mg(2+). D174 (proton acceptor) is an active-site residue. Y223 contacts substrate.

The protein belongs to the GHMP kinase family. GalK subfamily.

It is found in the cytoplasm. The enzyme catalyses alpha-D-galactose + ATP = alpha-D-galactose 1-phosphate + ADP + H(+). Its pathway is carbohydrate metabolism; galactose metabolism. Its function is as follows. Catalyzes the transfer of the gamma-phosphate of ATP to D-galactose to form alpha-D-galactose-1-phosphate (Gal-1-P). In Yersinia pseudotuberculosis serotype O:1b (strain IP 31758), this protein is Galactokinase.